The following is a 508-amino-acid chain: Photosystem II CP47 reaction center protein (508 aa).

6 consecutive transmembrane segments (helical) span residues 21 to 36 (SVHIMHTALVAGWAGS), 101 to 115 (IVFSGLCFLAAIWHW), 140 to 156 (GIHLFLSGVACFGFGVF), 203 to 218 (IAAGTLGILAGLFHLS), 237 to 252 (VLSSSIAAVFFAAFVV), and 457 to 472 (SFALLFFFGHIWHGAR).

This sequence belongs to the PsbB/PsbC family. PsbB subfamily. In terms of assembly, PSII is composed of 1 copy each of membrane proteins PsbA, PsbB, PsbC, PsbD, PsbE, PsbF, PsbH, PsbI, PsbJ, PsbK, PsbL, PsbM, PsbT, PsbX, PsbY, PsbZ, Psb30/Ycf12, at least 3 peripheral proteins of the oxygen-evolving complex and a large number of cofactors. It forms dimeric complexes. Binds multiple chlorophylls. PSII binds additional chlorophylls, carotenoids and specific lipids. is required as a cofactor.

The protein localises to the plastid. It localises to the chloroplast thylakoid membrane. Its function is as follows. One of the components of the core complex of photosystem II (PSII). It binds chlorophyll and helps catalyze the primary light-induced photochemical processes of PSII. PSII is a light-driven water:plastoquinone oxidoreductase, using light energy to abstract electrons from H(2)O, generating O(2) and a proton gradient subsequently used for ATP formation. The sequence is that of Photosystem II CP47 reaction center protein from Jasminum nudiflorum (Winter jasmine).